Here is a 103-residue protein sequence, read N- to C-terminus: Large ribosomal subunit protein bL21 (103 aa).

The protein belongs to the bacterial ribosomal protein bL21 family. As to quaternary structure, part of the 50S ribosomal subunit. Contacts protein L20.

Functionally, this protein binds to 23S rRNA in the presence of protein L20. In Glaesserella parasuis serovar 5 (strain SH0165) (Haemophilus parasuis), this protein is Large ribosomal subunit protein bL21.